The chain runs to 469 residues: Glutamine synthetase (469 aa).

Residues 13–97 (HEVKFVDLRF…IRCDILEPGT (85 aa)) enclose the GS beta-grasp domain. Positions 105 to 469 (PRSIAKRAED…PVEFELYYSV (365 aa)) constitute a GS catalytic domain. 2 residues coordinate Mg(2+): Glu130 and Glu132. Glu208 contacts ATP. Mg(2+)-binding residues include Glu213 and Glu221. L-glutamate-binding positions include 265 to 266 (NG) and Gly266. Residue His270 participates in Mg(2+) binding. ATP-binding positions include 272–274 (HMS) and Ser274. Residues Arg322, Glu328, and Arg340 each coordinate L-glutamate. The ATP site is built by Arg340, Arg345, and Lys353. Glu358 is a binding site for Mg(2+). Arg360 provides a ligand contact to L-glutamate. An O-AMP-tyrosine modification is found at Tyr398.

It belongs to the glutamine synthetase family. Oligomer of 12 subunits arranged in the form of two hexagons. Requires Mn(2+) as cofactor.

It is found in the cytoplasm. The catalysed reaction is L-glutamate + NH4(+) + ATP = L-glutamine + ADP + phosphate + H(+). When cellular nitrogen levels are high, the C-terminal adenylyl transferase (AT) of GlnE inhibits GlnA by covalent transfer of an adenylyl group from ATP to Tyr-398. Conversely, when nitrogen levels are low, the N-terminal adenylyl removase (AR) of GlnE activates GlnA by removing the adenylyl group by phosphorolysis. The fully adenylated enzyme complex is inactive. Catalyzes the ATP-dependent biosynthesis of glutamine from glutamate and ammonia. This chain is Glutamine synthetase, found in Salmonella typhi.